The following is a 75-amino-acid chain: CDC42 small effector protein 2-C (75 aa).

S-palmitoyl cysteine attachment occurs at residues cysteine 10 and cysteine 11. The CRIB domain occupies 29 to 42 (IGEPMNFVHTAHVG).

The protein belongs to the CDC42SE/SPEC family.

The protein resides in the cytoplasm. Its subcellular location is the cytoskeleton. It localises to the cell membrane. Probably involved in the organization of the actin cytoskeleton by acting downstream of CDC42, inducing actin filament assembly. This chain is CDC42 small effector protein 2-C (cdc42se2-c), found in Xenopus laevis (African clawed frog).